The chain runs to 28 residues: EASGETFVAENDACKCGSDCKCNPCTCK.

It belongs to the metallothionein superfamily. Type 15 family.

Metallothioneins have a high content of cysteine residues that bind various heavy metals. The polypeptide is Metallothionein-like protein type 2 LSC210 (LSC210) (Brassica napus (Rape)).